The primary structure comprises 353 residues: Serine/threonine-protein phosphatase 2A activator 1 (353 aa).

Residues 331-353 (ANNATTKMPPPLSTSTSRFIHRR) are disordered. Residues 343–353 (STSTSRFIHRR) show a composition bias toward polar residues.

This sequence belongs to the PTPA-type PPIase family.

It localises to the cytoplasm. Its subcellular location is the nucleus. The catalysed reaction is [protein]-peptidylproline (omega=180) = [protein]-peptidylproline (omega=0). Its function is as follows. PPIases accelerate the folding of proteins. It catalyzes the cis-trans isomerization of proline imidic peptide bonds in oligopeptides. Acts as a regulatory subunit for PP2A-like phosphatases modulating their activity or substrate specificity, probably by inducing a conformational change in the catalytic subunit, a direct target of the PPIase. Can reactivate inactive phosphatase PP2A-phosphatase methylesterase complexes (PP2Ai) in presence of ATP and Mg(2+) by dissociating the inactive form from the complex. This is Serine/threonine-protein phosphatase 2A activator 1 (RRD1) from Kluyveromyces lactis (strain ATCC 8585 / CBS 2359 / DSM 70799 / NBRC 1267 / NRRL Y-1140 / WM37) (Yeast).